Reading from the N-terminus, the 192-residue chain is ER protein translocation subcomplex subunit sec67 (192 aa).

In terms of assembly, component of the heterotetrameric Sec62/63complex composed of sec62, sec63, sec66 and sec72. The Sec62/63 complex associates with the Sec61 complex to form the Sec complex.

It is found in the cytoplasm. The protein localises to the nucleus. Its function is as follows. Acts as a non-essential component of the Sec62/63 complex which is involved in SRP-independent post-translational translocation across the endoplasmic reticulum (ER) and functions together with the Sec61 complex and bip1 in a channel-forming translocon complex. A cycle of assembly and disassembly of Sec62/63 complex from sec61 may govern the activity of the translocon. sec72 may be involved in signal peptide recognition for a defined subset of leader peptides, or may increase the efficiency of unusual or 'difficult' secretory precursors to the translocation pore, it may be that this protein binds charged leader peptides to the membrane until they engage the translocation apparatus. The protein is ER protein translocation subcomplex subunit sec67 (sec67) of Schizosaccharomyces pombe (strain 972 / ATCC 24843) (Fission yeast).